We begin with the raw amino-acid sequence, 577 residues long: Arginine--tRNA ligase (577 aa).

The 'HIGH' region signature appears at 122–132 (PNVAKEMHVGH).

This sequence belongs to the class-I aminoacyl-tRNA synthetase family. As to quaternary structure, monomer.

It is found in the cytoplasm. The enzyme catalyses tRNA(Arg) + L-arginine + ATP = L-arginyl-tRNA(Arg) + AMP + diphosphate. The sequence is that of Arginine--tRNA ligase from Aliivibrio fischeri (strain MJ11) (Vibrio fischeri).